The chain runs to 153 residues: uncharacterized protein (153 aa).

Ala2 carries the N-acetylalanine modification.

This is an uncharacterized protein from Arabidopsis thaliana (Mouse-ear cress).